The chain runs to 509 residues: Bifunctional purine biosynthesis protein PurH (509 aa).

The 144-residue stretch at 1–144 (MKRALISVSD…KNYAAVTVVV (144 aa)) folds into the MGS-like domain.

This sequence belongs to the PurH family.

It carries out the reaction (6R)-10-formyltetrahydrofolate + 5-amino-1-(5-phospho-beta-D-ribosyl)imidazole-4-carboxamide = 5-formamido-1-(5-phospho-D-ribosyl)imidazole-4-carboxamide + (6S)-5,6,7,8-tetrahydrofolate. It catalyses the reaction IMP + H2O = 5-formamido-1-(5-phospho-D-ribosyl)imidazole-4-carboxamide. Its pathway is purine metabolism; IMP biosynthesis via de novo pathway; 5-formamido-1-(5-phospho-D-ribosyl)imidazole-4-carboxamide from 5-amino-1-(5-phospho-D-ribosyl)imidazole-4-carboxamide (10-formyl THF route): step 1/1. It functions in the pathway purine metabolism; IMP biosynthesis via de novo pathway; IMP from 5-formamido-1-(5-phospho-D-ribosyl)imidazole-4-carboxamide: step 1/1. The sequence is that of Bifunctional purine biosynthesis protein PurH from Listeria monocytogenes serotype 4b (strain CLIP80459).